We begin with the raw amino-acid sequence, 355 residues long: MEHIGFFPPHDGVSLRALAEHLGAELADEAFAGVIIKSIAPVYRAGDGDVCYLLSRKNRAELETCKASAIICLPTLSSLVPEHIPVLLSKKPHTDFALAGALLHPQAMRPVALTSTPTLISPTAFVDPTAKLEADVGVEPGAVVGPGAEIGEGTRIGAGAIIGPGVKIGRHCTIGGGASVLCSYLGNGVIIHNGARIGQDGFGYAPSPRGMIKIVQIGRVIIQDNVEIGANTTIDRGTMDDTVIGEGTKIDNQVQIGHNVRIGRYCAIVSQVGIAGSAVIGDGVQIGGHTGINGHIQIGDGVQIGAMSGVMNSIPAGERFAGIPARPLWDFLREAAEVAKRSGAREKKDGSAEHD.

Histidine 258 serves as the catalytic Proton acceptor.

The protein belongs to the transferase hexapeptide repeat family. LpxD subfamily. In terms of assembly, homotrimer.

It catalyses the reaction a UDP-3-O-[(3R)-3-hydroxyacyl]-alpha-D-glucosamine + a (3R)-hydroxyacyl-[ACP] = a UDP-2-N,3-O-bis[(3R)-3-hydroxyacyl]-alpha-D-glucosamine + holo-[ACP] + H(+). The protein operates within bacterial outer membrane biogenesis; LPS lipid A biosynthesis. In terms of biological role, catalyzes the N-acylation of UDP-3-O-acylglucosamine using 3-hydroxyacyl-ACP as the acyl donor. Is involved in the biosynthesis of lipid A, a phosphorylated glycolipid that anchors the lipopolysaccharide to the outer membrane of the cell. This is UDP-3-O-acylglucosamine N-acyltransferase from Rhizobium rhizogenes (strain K84 / ATCC BAA-868) (Agrobacterium radiobacter).